We begin with the raw amino-acid sequence, 1385 residues long: Pesticidal crystal protein Cry5Aa (1385 aa).

Disordered stretches follow at residues N768–N799 and P1359–Q1385. Positions N782–G796 are enriched in gly residues. The span at N1370 to Q1385 shows a compositional bias: low complexity.

The protein belongs to the delta endotoxin family.

In terms of biological role, endotoxin with nematicidal activity. This chain is Pesticidal crystal protein Cry5Aa (cry5Aa), found in Bacillus thuringiensis subsp. darmstadiensis.